Consider the following 120-residue polypeptide: Small ribosomal subunit protein uS13 (120 aa).

The interval 92–120 (RRGLPCRGQRTRTNARTRKGPRKPIAGKK) is disordered.

It belongs to the universal ribosomal protein uS13 family. In terms of assembly, part of the 30S ribosomal subunit. Forms a loose heterodimer with protein S19. Forms two bridges to the 50S subunit in the 70S ribosome.

Functionally, located at the top of the head of the 30S subunit, it contacts several helices of the 16S rRNA. In the 70S ribosome it contacts the 23S rRNA (bridge B1a) and protein L5 of the 50S subunit (bridge B1b), connecting the 2 subunits; these bridges are implicated in subunit movement. Contacts the tRNAs in the A and P-sites. The protein is Small ribosomal subunit protein uS13 of Laribacter hongkongensis (strain HLHK9).